The following is a 968-amino-acid chain: RNA polymerase-associated protein RapA (968 aa).

One can recognise a Helicase ATP-binding domain in the interval 164 to 334 (EVGQRHAPRV…FARLRLLDPD (171 aa)). An ATP-binding site is contributed by 177–184 (DEVGLGKT). Residues 280–283 (DEAH) carry the DEAH box motif. A Helicase C-terminal domain is found at 490-664 (RVEWLLNYLI…ATPSEQEGLD (175 aa)).

This sequence belongs to the SNF2/RAD54 helicase family. RapA subfamily. Interacts with the RNAP. Has a higher affinity for the core RNAP than for the holoenzyme. Its ATPase activity is stimulated by binding to RNAP.

In terms of biological role, transcription regulator that activates transcription by stimulating RNA polymerase (RNAP) recycling in case of stress conditions such as supercoiled DNA or high salt concentrations. Probably acts by releasing the RNAP, when it is trapped or immobilized on tightly supercoiled DNA. Does not activate transcription on linear DNA. Probably not involved in DNA repair. The chain is RNA polymerase-associated protein RapA from Yersinia enterocolitica serotype O:8 / biotype 1B (strain NCTC 13174 / 8081).